The following is a 216-amino-acid chain: Cytochrome c biogenesis ATP-binding export protein CcmA (216 aa).

The ABC transporter domain occupies 11 to 216 (VSASKLTCIR…RKIRLDYRFV (206 aa)). 43–50 (GPNGAGKT) contacts ATP.

It belongs to the ABC transporter superfamily. CcmA exporter (TC 3.A.1.107) family. In terms of assembly, the complex is composed of two ATP-binding proteins (CcmA) and two transmembrane proteins (CcmB).

It localises to the cell inner membrane. It carries out the reaction heme b(in) + ATP + H2O = heme b(out) + ADP + phosphate + H(+). Its function is as follows. Part of the ABC transporter complex CcmAB involved in the biogenesis of c-type cytochromes; once thought to export heme, this seems not to be the case, but its exact role is uncertain. Responsible for energy coupling to the transport system. In Shewanella sp. (strain MR-4), this protein is Cytochrome c biogenesis ATP-binding export protein CcmA.